The sequence spans 101 residues: MIPGELFPETGDIELNAGRATVKVAVANTGDRPVQVGSHFHFYEVNPALAFDRAQVKGMRLDIPAGTAVRFEPGDQREVTLVPLVGQRQVFGFNGKIQGAL.

The protein belongs to the urease beta subunit family. In terms of assembly, heterotrimer of UreA (gamma), UreB (beta) and UreC (alpha) subunits. Three heterotrimers associate to form the active enzyme.

The protein resides in the cytoplasm. It catalyses the reaction urea + 2 H2O + H(+) = hydrogencarbonate + 2 NH4(+). It participates in nitrogen metabolism; urea degradation; CO(2) and NH(3) from urea (urease route): step 1/1. The sequence is that of Urease subunit beta from Acaryochloris marina (strain MBIC 11017).